We begin with the raw amino-acid sequence, 606 residues long: Phosphoenolpyruvate carboxykinase [GTP] (606 aa).

Substrate-binding positions include Arg79 and 218 to 220; that span reads YGG. Mn(2+) is bound by residues Lys227 and His247. Ser269 serves as a coordination point for substrate. Position 270–275 (270–275) interacts with GTP; that stretch reads ACGKTN. Residue Cys271 is part of the active site. A Mn(2+)-binding site is contributed by Asp294. 384 to 386 provides a ligand contact to substrate; sequence NSR. GTP-binding positions include Arg386, Arg417, and 512-515; that span reads FGEN.

Belongs to the phosphoenolpyruvate carboxykinase [GTP] family. Monomer. Requires Mn(2+) as cofactor.

It localises to the cytoplasm. The enzyme catalyses oxaloacetate + GTP = phosphoenolpyruvate + GDP + CO2. It participates in carbohydrate biosynthesis; gluconeogenesis. Catalyzes the conversion of oxaloacetate (OAA) to phosphoenolpyruvate (PEP), the rate-limiting step in the metabolic pathway that produces glucose from lactate and other precursors derived from the citric acid cycle. This chain is Phosphoenolpyruvate carboxykinase [GTP], found in Corynebacterium jeikeium (strain K411).